The following is a 309-amino-acid chain: Methionyl-tRNA formyltransferase (309 aa).

109–112 (SLLP) is a (6S)-5,6,7,8-tetrahydrofolate binding site.

It belongs to the Fmt family.

The catalysed reaction is L-methionyl-tRNA(fMet) + (6R)-10-formyltetrahydrofolate = N-formyl-L-methionyl-tRNA(fMet) + (6S)-5,6,7,8-tetrahydrofolate + H(+). Functionally, attaches a formyl group to the free amino group of methionyl-tRNA(fMet). The formyl group appears to play a dual role in the initiator identity of N-formylmethionyl-tRNA by promoting its recognition by IF2 and preventing the misappropriation of this tRNA by the elongation apparatus. This is Methionyl-tRNA formyltransferase from Clostridium perfringens (strain 13 / Type A).